The following is a 108-amino-acid chain: UPF0060 membrane protein KPN78578_15550 (108 aa).

The next 4 helical transmembrane spans lie at 6–26 (LLFFATALCEIVGCYLPWLWL), 29–49 (GATPLLLIPTALALALFVWLL), 61–81 (AAYGGVYVCTALLWLRVVDGV), and 86–106 (YDWAGAAIALCGMLIIVAGWG).

The protein belongs to the UPF0060 family.

It is found in the cell inner membrane. The protein is UPF0060 membrane protein KPN78578_15550 of Klebsiella pneumoniae subsp. pneumoniae (strain ATCC 700721 / MGH 78578).